A 542-amino-acid polypeptide reads, in one-letter code: Tripartite motif-containing protein 26 (542 aa).

The RING-type zinc finger occupies 16–57 (CSICLDYLRDPVTIDCGHVFCRSCTSDIRPISGNRPVCPLCK). The segment at 97 to 138 (QDMKLCERHQEKLHYYCEDDGKLLCVMCRESREHRPHTAVLV) adopts a B box-type zinc-finger fold. Residues Cys-102, His-105, Cys-124, and His-130 each coordinate Zn(2+). Positions 197-243 (QFLKKREQHLLDQLATLEQLLTEGREKFKTRGVSELDRLTLVISELE) form a coiled coil. The B30.2/SPRY domain maps to 298–542 (RGLRQFQGKL…WPEARLLLRP (245 aa)). The disordered stretch occupies residues 379-440 (REGWSEDEEE…EEEEEVQESC (62 aa)). Acidic residues-rich tracts occupy residues 383-405 (SEDE…EEPG) and 413-437 (WETD…EEVQ). A coiled-coil region spans residues 411–440 (EDWETDEEDESLGEEEEEEEEEEEEVQESC).

The protein belongs to the TRIM/RBCC family. Interacts with TBK1; this interaction bridges together TBK1 and NEMO in order to activate TBK1. Interacts with INCA1. In terms of processing, autoubiquitinates upon viral infection. In turn, autoubiquitinated TRIM26 recruits NEMO and bridges TBK1-NEMO interaction.

The protein localises to the cytoplasm. It localises to the nucleus. It carries out the reaction S-ubiquitinyl-[E2 ubiquitin-conjugating enzyme]-L-cysteine + [acceptor protein]-L-lysine = [E2 ubiquitin-conjugating enzyme]-L-cysteine + N(6)-ubiquitinyl-[acceptor protein]-L-lysine.. Its function is as follows. E3 ubiquitin-protein ligase which regulates the IFN-beta production and antiviral response downstream of various DNA-encoded pattern-recognition receptors (PRRs). Also plays a central role in determining the response to different forms of oxidative stress by controlling levels of DNA glycosylases NEIL1, NEIL3 and NTH1 that are involved in repair of damaged DNA. Promotes nuclear IRF3 ubiquitination and proteasomal degradation. Bridges together TBK1 and NEMO during the innate response to viral infection leading to the activation of TBK1. Positively regulates LPS-mediated inflammatory innate immune response by catalyzing the 'Lys-11'-linked polyubiquitination of TAB1 to enhance its activation and subsequent NF-kappa-B and MAPK signaling. In a manner independent of its catalytic activity, inhibits WWP2, a SOX2-directed E3 ubiquitin ligase, and thus protects SOX2 from polyubiquitination and proteasomal degradation. Ubiquitinates the histone acetyltransferase protein complex component PHF20 and thereby triggers its degradation in the nucleus after its recruitment by the histone demethylase KDM6B, serving as a scaffold protein. Upon induction by TGF-beta, ubiquitinates the TFIID component TAF7 for proteasomal degradation. Induces ferroptosis by ubiquitinating SLC7A11, a critical protein for lipid reactive oxygen species (ROS) scavenging. The sequence is that of Tripartite motif-containing protein 26 (Trim26) from Rattus norvegicus (Rat).